We begin with the raw amino-acid sequence, 330 residues long: uncharacterized protein (330 aa).

10 helical membrane passes run 27–47 (MGAY…VVVG), 56–76 (VFLS…MLLF), 90–110 (VFVL…CLLY), 119–139 (ESGI…FFLL), 147–167 (TLIG…FGAG), 176–196 (LFGN…TLMA), 206–226 (LAIS…FALF), 243–263 (YVLY…YSGV), 270–290 (VSGI…GVIL), and 294–314 (FEFV…VTVI). 2 EamA domains span residues 38–163 (AIVG…AINL) and 187–314 (IGEA…VTVI).

This sequence belongs to the EamA transporter family.

The protein resides in the cell membrane. This is an uncharacterized protein from Bacillus subtilis (strain 168).